The chain runs to 166 residues: MAIKLEDKKAIVAEVNEAAKVALSAVVADARGVTVSAMTGLRKEAREAGVYVRVVRNTLLKRAVEGTEYSILNDAFKGPTLIAFSNEHPGAAARLFKEFAKGQDKFEIKAAAFDGNFIAANQIDVLATLPTRDEAIARLMSVIQGATSKLARTLAAVRDQKEAAAA.

The protein belongs to the universal ribosomal protein uL10 family. Part of the ribosomal stalk of the 50S ribosomal subunit. The N-terminus interacts with L11 and the large rRNA to form the base of the stalk. The C-terminus forms an elongated spine to which L12 dimers bind in a sequential fashion forming a multimeric L10(L12)X complex.

Forms part of the ribosomal stalk, playing a central role in the interaction of the ribosome with GTP-bound translation factors. In Pseudomonas putida (strain W619), this protein is Large ribosomal subunit protein uL10.